The following is a 214-amino-acid chain: Orotate phosphoribosyltransferase (214 aa).

Lys26 lines the 5-phospho-alpha-D-ribose 1-diphosphate pocket. Residue 34 to 35 (FF) participates in orotate binding. Residues 72 to 73 (YK), Arg99, Lys100, Lys103, His105, and 124 to 132 (DDVITAGTA) contribute to the 5-phospho-alpha-D-ribose 1-diphosphate site. The orotate site is built by Thr128 and Arg157.

This sequence belongs to the purine/pyrimidine phosphoribosyltransferase family. PyrE subfamily. As to quaternary structure, homodimer. Mg(2+) serves as cofactor.

The catalysed reaction is orotidine 5'-phosphate + diphosphate = orotate + 5-phospho-alpha-D-ribose 1-diphosphate. The protein operates within pyrimidine metabolism; UMP biosynthesis via de novo pathway; UMP from orotate: step 1/2. Its function is as follows. Catalyzes the transfer of a ribosyl phosphate group from 5-phosphoribose 1-diphosphate to orotate, leading to the formation of orotidine monophosphate (OMP). The sequence is that of Orotate phosphoribosyltransferase from Pseudomonas fluorescens (strain Pf0-1).